We begin with the raw amino-acid sequence, 288 residues long: ATP synthase gamma chain (288 aa).

The protein belongs to the ATPase gamma chain family. F-type ATPases have 2 components, CF(1) - the catalytic core - and CF(0) - the membrane proton channel. CF(1) has five subunits: alpha(3), beta(3), gamma(1), delta(1), epsilon(1). CF(0) has three main subunits: a, b and c.

The protein localises to the cell inner membrane. Its function is as follows. Produces ATP from ADP in the presence of a proton gradient across the membrane. The gamma chain is believed to be important in regulating ATPase activity and the flow of protons through the CF(0) complex. The chain is ATP synthase gamma chain from Vibrio parahaemolyticus serotype O3:K6 (strain RIMD 2210633).